Consider the following 1088-residue polypeptide: DEAD-box ATP-dependent RNA helicase 40 (1088 aa).

Disordered regions lie at residues 1-28 (MATTEDTPASAGPRYAPEDPTLPQPWKG), 47-178 (TQYE…QYAH), and 192-254 (TQGL…QNTH). Residue alanine 2 is modified to N-acetylalanine. The region spanning 20-54 (PTLPQPWKGLIDGSTGILYYWNPETNVTQYERPSA) is the WW domain. Composition is skewed to low complexity over residues 87-137 (VGHV…SQSM), 148-171 (QTYQPTTQQQQQGMQNQHSQMPQQ), and 200-215 (QTPQGGPHGQQFPSQQ). Residues 222-231 (PKREGDEFHG) show a composition bias toward basic and acidic residues. The segment covering 236 to 254 (GFSQPHLPNSERSPSQNTH) has biased composition (polar residues). The Q motif signature appears at 435 to 463 (ITFESSGLPPEILRELLSAGFPSPTPIQA). A Helicase ATP-binding domain is found at 466–640 (WPIALQSRDI…SDLLVNPVQV (175 aa)). Residue 479–486 (AKTGSGKT) participates in ATP binding. A DEAD box motif is present at residues 588 to 591 (DEAD). The Helicase C-terminal domain maps to 669-813 (RLEQILRSQE…QVPPQVRDIA (145 aa)). 4 stretches are compositionally biased toward gly residues: residues 861-885 (EGGFGGREGGFGGREGGFGGRGGRF), 893-902 (GRGGNRGRGF), 911-920 (NVGGRGGFGR), and 932-944 (FGRGSGRGFGRGV). The interval 861 to 1033 (EGGFGGREGG…RRDRAPRVSG (173 aa)) is disordered. Basic and acidic residues predominate over residues 945–963 (GRFDNRRGRSRSRSPDLVR). Residues 969–983 (SSYSRSRSRSGSYSR) are compositionally biased toward low complexity. Positions 984-1013 (SRSRSRSWSRSRSRSPRHSRDRGGHNRSRS) are enriched in basic residues.

Belongs to the DEAD box helicase family. DDX5/DBP2 subfamily.

The protein localises to the nucleus. It catalyses the reaction ATP + H2O = ADP + phosphate + H(+). ATP-dependent RNA helicase involved nonsense-mediated mRNA decay and ribosome biogenesis through rRNA processing. In Arabidopsis thaliana (Mouse-ear cress), this protein is DEAD-box ATP-dependent RNA helicase 40 (RH40).